Consider the following 757-residue polypeptide: Double zinc ribbon and ankyrin repeat-containing protein 1 (757 aa).

DZANK-type zinc fingers lie at residues 230–290 and 359–407; these read CAHC…VVCE and CSRC…GSCG. 2 ANK repeats span residues 631–662 and 666–695; these read ENRL…DPNC and QGRP…DIDQ.

As to quaternary structure, interacts with NINL. Associates with DYNC1H1 and multiple dynein intermediate and light chains as well as actin-binding proteins. In terms of tissue distribution, expressed in retina.

The protein resides in the cell projection. Its subcellular location is the cilium. Its function is as follows. Involved in vesicle transport in photoreceptor cells. The sequence is that of Double zinc ribbon and ankyrin repeat-containing protein 1 from Rattus norvegicus (Rat).